The primary structure comprises 183 residues: Ribosome rescue factor SmrB (183 aa).

One can recognise a Smr domain in the interval 98 to 173 (LDLHGLTQLQ…GDAALLVLIE (76 aa)).

The protein belongs to the SmrB family. As to quaternary structure, associates with collided ribosomes, but not with correctly translating polysomes.

In terms of biological role, acts as a ribosome collision sensor. Detects stalled/collided disomes (pairs of ribosomes where the leading ribosome is stalled and a second ribosome has collided with it) and endonucleolytically cleaves mRNA at the 5' boundary of the stalled ribosome. Stalled/collided disomes form a new interface (primarily via the 30S subunits) that binds SmrB. Cleaved mRNA becomes available for tmRNA ligation, leading to ribosomal subunit dissociation and rescue of stalled ribosomes. In Salmonella agona (strain SL483), this protein is Ribosome rescue factor SmrB.